Reading from the N-terminus, the 1270-residue chain is DNA-directed RNA polymerase subunit beta (1270 aa).

The protein belongs to the RNA polymerase beta chain family. In terms of assembly, the RNAP catalytic core consists of 2 alpha, 1 beta, 1 beta' and 1 omega subunit. When a sigma factor is associated with the core the holoenzyme is formed, which can initiate transcription.

The catalysed reaction is RNA(n) + a ribonucleoside 5'-triphosphate = RNA(n+1) + diphosphate. In terms of biological role, DNA-dependent RNA polymerase catalyzes the transcription of DNA into RNA using the four ribonucleoside triphosphates as substrates. The protein is DNA-directed RNA polymerase subunit beta of Flavobacterium psychrophilum (strain ATCC 49511 / DSM 21280 / CIP 103535 / JIP02/86).